We begin with the raw amino-acid sequence, 372 residues long: D-alanine--D-alanine ligase (372 aa).

One can recognise an ATP-grasp domain in the interval 145 to 349 (KTVLRAGGIP…CPNLLDQLIE (205 aa)). Residue 176–231 (DRWGTSELFVKAVSLGSSVATLPVKTETEFTKAVKEVFRYDDRLMVEPRIRGREIE) coordinates ATP. Aspartate 303, glutamate 316, and asparagine 318 together coordinate Mg(2+).

Belongs to the D-alanine--D-alanine ligase family. Mg(2+) serves as cofactor. It depends on Mn(2+) as a cofactor.

It is found in the cytoplasm. It catalyses the reaction 2 D-alanine + ATP = D-alanyl-D-alanine + ADP + phosphate + H(+). It functions in the pathway cell wall biogenesis; peptidoglycan biosynthesis. Cell wall formation. The protein is D-alanine--D-alanine ligase of Coxiella burnetii (strain CbuK_Q154) (Coxiella burnetii (strain Q154)).